Reading from the N-terminus, the 440-residue chain is Trigger factor (440 aa).

A PPIase FKBP-type domain is found at 162 to 247 (GDRVTFDFTG…LKKIEKFQLP (86 aa)).

The protein belongs to the FKBP-type PPIase family. Tig subfamily.

It is found in the cytoplasm. The catalysed reaction is [protein]-peptidylproline (omega=180) = [protein]-peptidylproline (omega=0). Involved in protein export. Acts as a chaperone by maintaining the newly synthesized protein in an open conformation. Functions as a peptidyl-prolyl cis-trans isomerase. This is Trigger factor from Hamiltonella defensa subsp. Acyrthosiphon pisum (strain 5AT).